A 144-amino-acid polypeptide reads, in one-letter code: Large ribosomal subunit protein uL13 (144 aa).

It belongs to the universal ribosomal protein uL13 family. Part of the 50S ribosomal subunit.

Its function is as follows. This protein is one of the early assembly proteins of the 50S ribosomal subunit, although it is not seen to bind rRNA by itself. It is important during the early stages of 50S assembly. This is Large ribosomal subunit protein uL13 from Clostridium acetobutylicum (strain ATCC 824 / DSM 792 / JCM 1419 / IAM 19013 / LMG 5710 / NBRC 13948 / NRRL B-527 / VKM B-1787 / 2291 / W).